The following is a 241-amino-acid chain: C-type lectin domain family 9 member A (241 aa).

Residues 1 to 34 (MHEEEIYTSLQWDIPTSEASQKCPSLSKCPGTWC) are Cytoplasmic-facing. Positions 5–10 (EIYTSL) match the ITAM-like motif. Residues 35 to 55 (IVTVISCVVCVGLLAASIFLG) traverse the membrane as a helical; Signal-anchor for type II membrane protein segment. Topologically, residues 56 to 241 (IKFSQVSSLV…CEKKAFGSCI (186 aa)) are extracellular. N-linked (GlcNAc...) asparagine glycosylation is found at Asn-81 and Asn-88. Cysteines 113 and 124 form a disulfide. The 114-residue stretch at 120–233 (NGKSCYYAFD…CSNWKYFICE (114 aa)) folds into the C-type lectin domain. Residues Asn-135, Asn-161, and Asn-223 are each glycosylated (N-linked (GlcNAc...) asparagine). Cystine bridges form between Cys-141/Cys-232 and Cys-211/Cys-224.

In terms of assembly, homodimer. N-glycosylated. In terms of tissue distribution, high expression in the spleen, moderate to low levels in several other tissues and cell types, but no detectable expression in skin dendritic cells or CD4(+) T-cells.

The protein resides in the membrane. Functionally, functions as an endocytic receptor on a small subset of myeloid cells specialized for the uptake and processing of material from dead cells. Recognizes filamentous form of actin in association with particular actin-binding domains of cytoskeletal proteins, including spectrin, exposed when cell membranes are damaged, and mediate the cross-presentation of dead-cell associated antigens in a Syk-dependent manner. The protein is C-type lectin domain family 9 member A (Clec9a) of Rattus norvegicus (Rat).